The chain runs to 78 residues: Large ribosomal subunit protein bL28 (78 aa).

Residues 1-26 are disordered; that stretch reads MSAYCQVTGRKPSFGKSVSHSHRRTN.

It belongs to the bacterial ribosomal protein bL28 family.

The sequence is that of Large ribosomal subunit protein bL28 from Corynebacterium jeikeium (strain K411).